A 227-amino-acid chain; its full sequence is Cytidylate kinase (227 aa).

7 to 15 (GPSGAGKGT) is an ATP binding site.

This sequence belongs to the cytidylate kinase family. Type 1 subfamily.

It localises to the cytoplasm. The catalysed reaction is CMP + ATP = CDP + ADP. The enzyme catalyses dCMP + ATP = dCDP + ADP. This chain is Cytidylate kinase, found in Actinobacillus succinogenes (strain ATCC 55618 / DSM 22257 / CCUG 43843 / 130Z).